A 472-amino-acid chain; its full sequence is Methylenetetrahydrofolate--tRNA-(uracil-5-)-methyltransferase TrmFO (472 aa).

Residue 10–15 participates in FAD binding; that stretch reads GGGLAG.

It belongs to the MnmG family. TrmFO subfamily. FAD serves as cofactor.

It localises to the cytoplasm. The enzyme catalyses uridine(54) in tRNA + (6R)-5,10-methylene-5,6,7,8-tetrahydrofolate + NADH + H(+) = 5-methyluridine(54) in tRNA + (6S)-5,6,7,8-tetrahydrofolate + NAD(+). The catalysed reaction is uridine(54) in tRNA + (6R)-5,10-methylene-5,6,7,8-tetrahydrofolate + NADPH + H(+) = 5-methyluridine(54) in tRNA + (6S)-5,6,7,8-tetrahydrofolate + NADP(+). Catalyzes the folate-dependent formation of 5-methyl-uridine at position 54 (M-5-U54) in all tRNAs. The sequence is that of Methylenetetrahydrofolate--tRNA-(uracil-5-)-methyltransferase TrmFO from Mesorhizobium japonicum (strain LMG 29417 / CECT 9101 / MAFF 303099) (Mesorhizobium loti (strain MAFF 303099)).